A 464-amino-acid chain; its full sequence is Cyclic 2,3-diphosphoglycerate synthetase (464 aa).

Belongs to the cyclic 2,3-diphosphoglycerate synthetase family.

It is found in the cytoplasm. The catalysed reaction is (2R)-2,3-bisphosphoglycerate + ATP + H(+) = cyclic (2R)-2,3-bisphosphoglycerate + ADP + phosphate. Activity decreases in response to phosphate limitation. Its function is as follows. Catalyzes the formation of cyclic 2,3-diphosphoglycerate (cDPG) by formation of an intramolecular phosphoanhydride bond at the expense of ATP. Not able to catalyze cDPG hydrolysis. May be involved in osmotic balance. This Methanothermobacter thermautotrophicus (strain ATCC 29096 / DSM 1053 / JCM 10044 / NBRC 100330 / Delta H) (Methanobacterium thermoautotrophicum) protein is Cyclic 2,3-diphosphoglycerate synthetase (cpgS).